The sequence spans 766 residues: Phosphoribosylformylglycinamidine synthase subunit PurL (766 aa).

The active site involves His-66. Positions 69 and 113 each coordinate ATP. Residue Glu-115 coordinates Mg(2+). Residues Ser-116–His-119 and Arg-138 each bind substrate. His-117 serves as the catalytic Proton acceptor. Asp-139 serves as a coordination point for Mg(2+). Gln-264 is a binding site for substrate. Residue Asp-292 participates in Mg(2+) binding. Position 336-338 (Glu-336–Gln-338) interacts with substrate. ATP contacts are provided by Asn-524 and Gly-561. Position 562 (Asn-562) interacts with Mg(2+). Residue Ser-564 participates in substrate binding.

It belongs to the FGAMS family. In terms of assembly, monomer. Part of the FGAM synthase complex composed of 1 PurL, 1 PurQ and 2 PurS subunits.

The protein resides in the cytoplasm. It carries out the reaction N(2)-formyl-N(1)-(5-phospho-beta-D-ribosyl)glycinamide + L-glutamine + ATP + H2O = 2-formamido-N(1)-(5-O-phospho-beta-D-ribosyl)acetamidine + L-glutamate + ADP + phosphate + H(+). The protein operates within purine metabolism; IMP biosynthesis via de novo pathway; 5-amino-1-(5-phospho-D-ribosyl)imidazole from N(2)-formyl-N(1)-(5-phospho-D-ribosyl)glycinamide: step 1/2. Its function is as follows. Part of the phosphoribosylformylglycinamidine synthase complex involved in the purines biosynthetic pathway. Catalyzes the ATP-dependent conversion of formylglycinamide ribonucleotide (FGAR) and glutamine to yield formylglycinamidine ribonucleotide (FGAM) and glutamate. The FGAM synthase complex is composed of three subunits. PurQ produces an ammonia molecule by converting glutamine to glutamate. PurL transfers the ammonia molecule to FGAR to form FGAM in an ATP-dependent manner. PurS interacts with PurQ and PurL and is thought to assist in the transfer of the ammonia molecule from PurQ to PurL. In Mycobacterium tuberculosis (strain CDC 1551 / Oshkosh), this protein is Phosphoribosylformylglycinamidine synthase subunit PurL.